The primary structure comprises 280 residues: MPELPEVETTRRKIEPLLRGKTIERIVHDAPHRYRNTERAHGRQVRGLTRRGKYLLLHLAAADAAEDEPHDLELIVHLGMTGGFRLEEGPHTRVTFELGSGEKLYFNDPRRFGKVVAVAPGDYASMPTLAAMGPEPLSDDFTEAEFVALAARCGPVKPWLLSQKPVSGVGNIYADESLWHARLHPAQTRLNADEAGRLYRAIREVMAAAVDKGGSSLGNGVGNYRQHDGEGGGFQHSHHVYGRAGQPCDRCGTPIEKIVLGQRGTHFCPVCQPLRTDRSA.

The Schiff-base intermediate with DNA role is filled by proline 2. The active-site Proton donor is the glutamate 3. Lysine 53 acts as the Proton donor; for beta-elimination activity in catalysis. DNA is bound by residues histidine 91, arginine 110, and arginine 152. The FPG-type zinc-finger motif lies at 239 to 273 (HVYGRAGQPCDRCGTPIEKIVLGQRGTHFCPVCQP). Arginine 263 serves as the catalytic Proton donor; for delta-elimination activity.

This sequence belongs to the FPG family. Monomer. Requires Zn(2+) as cofactor.

It carries out the reaction Hydrolysis of DNA containing ring-opened 7-methylguanine residues, releasing 2,6-diamino-4-hydroxy-5-(N-methyl)formamidopyrimidine.. The catalysed reaction is 2'-deoxyribonucleotide-(2'-deoxyribose 5'-phosphate)-2'-deoxyribonucleotide-DNA = a 3'-end 2'-deoxyribonucleotide-(2,3-dehydro-2,3-deoxyribose 5'-phosphate)-DNA + a 5'-end 5'-phospho-2'-deoxyribonucleoside-DNA + H(+). Involved in base excision repair of DNA damaged by oxidation or by mutagenic agents. Acts as a DNA glycosylase that recognizes and removes damaged bases. Has a preference for oxidized purines, such as 7,8-dihydro-8-oxoguanine (8-oxoG). Has AP (apurinic/apyrimidinic) lyase activity and introduces nicks in the DNA strand. Cleaves the DNA backbone by beta-delta elimination to generate a single-strand break at the site of the removed base with both 3'- and 5'-phosphates. This chain is Formamidopyrimidine-DNA glycosylase (mutM), found in Deinococcus radiodurans (strain ATCC 13939 / DSM 20539 / JCM 16871 / CCUG 27074 / LMG 4051 / NBRC 15346 / NCIMB 9279 / VKM B-1422 / R1).